The sequence spans 365 residues: tRNA N6-adenosine threonylcarbamoyltransferase (365 aa).

Residues His119 and His123 each contribute to the Fe cation site. Substrate is bound by residues 141 to 145 (LVSGG), Asp174, Gly187, and Asn289. Asp317 serves as a coordination point for Fe cation. The disordered stretch occupies residues 341-365 (SARPRWPLDKTSPALIGSGKKGAKA).

This sequence belongs to the KAE1 / TsaD family. The cofactor is Fe(2+).

The protein resides in the cytoplasm. The enzyme catalyses L-threonylcarbamoyladenylate + adenosine(37) in tRNA = N(6)-L-threonylcarbamoyladenosine(37) in tRNA + AMP + H(+). In terms of biological role, required for the formation of a threonylcarbamoyl group on adenosine at position 37 (t(6)A37) in tRNAs that read codons beginning with adenine. Is involved in the transfer of the threonylcarbamoyl moiety of threonylcarbamoyl-AMP (TC-AMP) to the N6 group of A37, together with TsaE and TsaB. TsaD likely plays a direct catalytic role in this reaction. This chain is tRNA N6-adenosine threonylcarbamoyltransferase, found in Ruegeria sp. (strain TM1040) (Silicibacter sp.).